We begin with the raw amino-acid sequence, 79 residues long: uncharacterized protein (79 aa).

The protein belongs to the BolA/IbaG family.

This is an uncharacterized protein from Buchnera aphidicola subsp. Baizongia pistaciae (strain Bp).